The primary structure comprises 440 residues: 3-phosphoshikimate 1-carboxyvinyltransferase (440 aa).

Residues Lys19, Ser20, and Arg24 each coordinate 3-phosphoshikimate. Lys19 contributes to the phosphoenolpyruvate binding site. 2 residues coordinate phosphoenolpyruvate: Gly92 and Arg121. Ser166, Gln168, Asp315, and Lys342 together coordinate 3-phosphoshikimate. Residue Gln168 participates in phosphoenolpyruvate binding. Asp315 acts as the Proton acceptor in catalysis. Positions 346 and 399 each coordinate phosphoenolpyruvate.

It belongs to the EPSP synthase family. In terms of assembly, monomer.

Its subcellular location is the cytoplasm. The enzyme catalyses 3-phosphoshikimate + phosphoenolpyruvate = 5-O-(1-carboxyvinyl)-3-phosphoshikimate + phosphate. Its pathway is metabolic intermediate biosynthesis; chorismate biosynthesis; chorismate from D-erythrose 4-phosphate and phosphoenolpyruvate: step 6/7. Its function is as follows. Catalyzes the transfer of the enolpyruvyl moiety of phosphoenolpyruvate (PEP) to the 5-hydroxyl of shikimate-3-phosphate (S3P) to produce enolpyruvyl shikimate-3-phosphate and inorganic phosphate. The protein is 3-phosphoshikimate 1-carboxyvinyltransferase of Leptospira borgpetersenii serovar Hardjo-bovis (strain JB197).